The following is an 810-amino-acid chain: Plasminogen (810 aa).

The first 19 residues, 1–19 (MEHKEVVLLLLLFLKSGQG), serve as a signal peptide directing secretion. One can recognise a PAN domain in the interval 20–98 (EPLDDYVNTK…RDVVLFEKKV (79 aa)). 12 disulfides stabilise this stretch: Cys49-Cys73, Cys53-Cys61, Cys103-Cys181, Cys124-Cys164, Cys152-Cys176, Cys185-Cys262, Cys188-Cys316, Cys206-Cys245, Cys234-Cys257, Cys275-Cys352, Cys296-Cys335, and Cys324-Cys347. 3 consecutive Kringle domains span residues 103 to 181 (CKTG…IPEC), 184 to 262 (ECMH…IPRC), and 275 to 352 (CLKG…IPSC). Residues 125–141 (QKWSSTSPHRPTFSPAT) show a composition bias toward polar residues. Residues 125–145 (QKWSSTSPHRPTFSPATHPSE) form a disordered region. L-lysine contacts are provided by Thr136, Asp158, and Arg172. The O-linked (GalNAc...) threonine glycan is linked to Thr365. Intrachain disulfides connect Cys377–Cys454, Cys398–Cys437, Cys426–Cys449, Cys481–Cys560, Cys502–Cys543, Cys531–Cys555, Cys567–Cys685, Cys577–Cys585, and Cys607–Cys623. 2 consecutive Kringle domains span residues 377-454 (CYHG…LKKC) and 481-560 (CMFG…VPQC). Asp432 and Arg445 together coordinate L-lysine. In terms of domain architecture, Peptidase S1 spans 581–808 (VVGGCVAYPH…FVTWIEGVMR (228 aa)). Residue Ser597 is modified to Phosphoserine. Catalysis depends on charge relay system residues His622 and Asp665. Phosphoserine is present on Ser688. Cystine bridges form between Cys699-Cys766, Cys729-Cys745, and Cys756-Cys784. Catalysis depends on Ser760, which acts as the Charge relay system.

It belongs to the peptidase S1 family. Plasminogen subfamily. As to quaternary structure, interacts with CSPG4 and AMOT. Interacts (via the Kringle domains) with HRG; the interaction tethers PLG to the cell surface and enhances its activation. Interacts (via Kringle 4 domain) with ADA; the interaction stimulates PLG activation when in complex with DPP4. Angiostatin: Interacts with ATP5F1A; the interaction inhibits most of the angiogenic effects of angiostatin. Post-translationally, in the presence of the inhibitor, the activation involves only cleavage after Arg-580, yielding two chains held together by two disulfide bonds. In the absence of the inhibitor, the activation involves additionally the removal of the activation peptide.

Its subcellular location is the secreted. The catalysed reaction is Preferential cleavage: Lys-|-Xaa &gt; Arg-|-Xaa, higher selectivity than trypsin. Converts fibrin into soluble products.. With respect to regulation, converted into plasmin by plasminogen activators, both plasminogen and its activator being bound to fibrin. Activated with catalytic amounts of streptokinase. In terms of biological role, plasmin dissolves the fibrin of blood clots and acts as a proteolytic factor in a variety of other processes including embryonic development, tissue remodeling, tumor invasion, and inflammation. In ovulation, weakens the walls of the Graafian follicle. It activates the urokinase-type plasminogen activator, collagenases and several complement zymogens, such as C1, C4 and C5. Cleavage of fibronectin and laminin leads to cell detachment and apoptosis. Also cleaves fibrin, thrombospondin and von Willebrand factor. Its role in tissue remodeling and tumor invasion may be modulated by CSPG4. Binds to cells. The sequence is that of Plasminogen (PLG) from Macaca mulatta (Rhesus macaque).